Here is a 153-residue protein sequence, read N- to C-terminus: Large ribosomal subunit protein uL13 (153 aa).

The interval 128–153 (SEHPHEAQSPEVLDVTSMNSKNTRSA) is disordered. Polar residues predominate over residues 143–153 (TSMNSKNTRSA).

Belongs to the universal ribosomal protein uL13 family. In terms of assembly, part of the 50S ribosomal subunit.

In terms of biological role, this protein is one of the early assembly proteins of the 50S ribosomal subunit, although it is not seen to bind rRNA by itself. It is important during the early stages of 50S assembly. In Roseobacter denitrificans (strain ATCC 33942 / OCh 114) (Erythrobacter sp. (strain OCh 114)), this protein is Large ribosomal subunit protein uL13.